We begin with the raw amino-acid sequence, 272 residues long: tRNA pseudouridine synthase A (272 aa).

The active-site Nucleophile is the aspartate 62. A substrate-binding site is contributed by tyrosine 120.

It belongs to the tRNA pseudouridine synthase TruA family. As to quaternary structure, homodimer.

The catalysed reaction is uridine(38/39/40) in tRNA = pseudouridine(38/39/40) in tRNA. Functionally, formation of pseudouridine at positions 38, 39 and 40 in the anticodon stem and loop of transfer RNAs. The protein is tRNA pseudouridine synthase A of Nitrosomonas europaea (strain ATCC 19718 / CIP 103999 / KCTC 2705 / NBRC 14298).